The primary structure comprises 686 residues: MTKSIYFSLGIHNHQPVGNFDFVIERAYEMSYKPLINFFFKHPDFPINVHFSGFLLLWLEKNHPEYFEKLKIMAERGQIEFVSGGFYEPILPIIPDKDKVQQIKKLNKYIYDKFGQTPKGMWLAERVWEPHLVKYIAEAGIEYVVVDDAHFFSVGLKEEDLFGYYLMEEQGYKLAVFPISMKLRYLIPFADPEETITYLDKFASEDKSKIALLFDDGEKFGLWPDTYRTVYEEGWLETFVSKIKENFLLVTPVNLYTYMQRVKPKGRIYLPTASYREMMEWVLFPEAQKELEELVEKLKTENLWDKFSPYVKGGFWRNFLAKYDESNHMQKKMLYVWKKVQDSPNEEVKEKAMEEVFQGQANDAYWHGIFGGLYLPHLRTAIYEHLIKAENYLENSEIRFNIFDFDCDGNDEIIVESPFFNLYLSPNHGGSVLEWDFKTKAFNLTNVLTRRKEAYHSKLSYVTSEAQGKSIHERWTAKEEGLENILFYDNHRRVSFTEKIFESEPVLEDLWKDSSRLEVDSFYENYDYEINKDENKIRVLFSGVFRGFELCKSYILYKDKSFVDVVYEIKNVSETPISLNFGWEINLNFLAPNHPDYYFLIGDQKYPLSSFGIEKVNNWKIFSGIGIELECVLDVEASLYRYPIETVSLSEEGFERVYQGSALIHFYKVDLPVGSTWRTTIRFWVK.

The Nucleophile role is filled by Glu125. Catalysis depends on Asp216, which acts as the Proton donor.

It belongs to the glycosyl hydrolase 57 family.

It is found in the cytoplasm. The catalysed reaction is Endohydrolysis of (1-&gt;4)-alpha-D-glucosidic linkages in polysaccharides containing three or more (1-&gt;4)-alpha-linked D-glucose units.. In terms of biological role, this amylase is a highly liquefying-type: oligomers appeared at the beginning of incubation, followed by a graded decrease in the amounts of maltotriose, maltose and glucose in prolonged incubation. This is Alpha-amylase 1 (amyA) from Dictyoglomus thermophilum (strain ATCC 35947 / DSM 3960 / H-6-12).